We begin with the raw amino-acid sequence, 583 residues long: Putative glutaminase 3 (583 aa).

Residues 1-29 (MDNKEKEDEELSDELKDQPGPSEKPRTPT) form a disordered region. Substrate contacts are provided by Ser216, Asn265, Glu311, Asn318, Tyr344, Tyr396, and Val414. ANK repeat units lie at residues 482-514 (DGQN…CKDY), 515-548 (DDRT…PCDR), and 549-581 (YDRT…LKGQ).

Belongs to the glutaminase family.

It carries out the reaction L-glutamine + H2O = L-glutamate + NH4(+). The polypeptide is Putative glutaminase 3 (glna-3) (Caenorhabditis elegans).